The primary structure comprises 293 residues: Protease HtpX (293 aa).

Transmembrane regions (helical) follow at residues 4–24 and 33–53; these read ISLF…VLSL and AGLM…SLLM. Histidine 139 contacts Zn(2+). Glutamate 140 is a catalytic residue. A Zn(2+)-binding site is contributed by histidine 143. The next 2 membrane-spanning stretches (helical) occupy residues 158 to 178 and 193 to 213; these read VVNT…AGFM and LVYF…ASII. Glutamate 222 provides a ligand contact to Zn(2+).

Belongs to the peptidase M48B family. Requires Zn(2+) as cofactor.

The protein resides in the cell inner membrane. In Sodalis glossinidius (strain morsitans), this protein is Protease HtpX.